The sequence spans 176 residues: MKPLVMLICFGVILLQLGVTKVCQHNEVQLGNECCPPCGLGQRVTKVCTERTSVTCTPCPNGTYVSGLYNCTDCTQCNVTQVMIRNCTSTNNTVCAPKNHTYFSTPGVQHHKQRQQNHTAHITVKQGKSGRHTLAWLSLFIFLVGIILLILYLIAAYRSERCQQCCSIGKIFYRTL.

Residues 1–20 form the signal peptide; that stretch reads MKPLVMLICFGVILLQLGVT. One copy of the TNFR-Cys repeat lies at 58-95; that stretch reads PCPNGTYVSGLYNCTDCTQCNVTQVMIRNCTSTNNTVC. Disulfide bonds link Cys59–Cys71, Cys74–Cys87, and Cys77–Cys95. A helical membrane pass occupies residues 134–154; sequence LAWLSLFIFLVGIILLILYLI.

Interacts with host TRIM23; this interaction causes auto-ubiquitination of TRAF6, leading to NF-kappaB activation.

Its subcellular location is the membrane. Its function is as follows. Activates NF-kappa-B in a tumor necrosis factor receptor (TNFR)-associated factor 6 (TRAF6)-dependent manner, causing the up-regulation of the chemokine CCL22. The chain is Membrane glycoprotein UL144 (UL144) from Human cytomegalovirus (strain Merlin) (HHV-5).